The sequence spans 221 residues: Small ribosomal subunit protein uS3c (221 aa).

One can recognise a KH type-2 domain in the interval 39–109 (LRDYLKTRLA…RVIVHVVEIA (71 aa)).

Belongs to the universal ribosomal protein uS3 family. As to quaternary structure, part of the 30S ribosomal subunit.

It localises to the plastid. The protein resides in the chloroplast. In Nephroselmis olivacea (Green alga), this protein is Small ribosomal subunit protein uS3c (rps3).